A 519-amino-acid polypeptide reads, in one-letter code: O-fucosyltransferase 31 (519 aa).

A helical; Signal-anchor for type II membrane protein transmembrane segment spans residues 18–38; that stretch reads ALAGVFVLLFPILYPNLFSPL. Asparagine 131 is a glycosylation site (N-linked (GlcNAc...) asparagine). Substrate is bound at residue 302–304; it reads HLR. Residues asparagine 373 and asparagine 474 are each glycosylated (N-linked (GlcNAc...) asparagine).

This sequence belongs to the glycosyltransferase GT106 family.

It localises to the membrane. It participates in glycan metabolism. This chain is O-fucosyltransferase 31, found in Arabidopsis thaliana (Mouse-ear cress).